A 741-amino-acid chain; its full sequence is Phosphoribosylformylglycinamidine synthase subunit PurL (741 aa).

The active site involves His54. Residues Tyr57 and Lys98 each contribute to the ATP site. Glu100 lines the Mg(2+) pocket. Substrate is bound by residues Ser101–His104 and Arg123. Catalysis depends on His102, which acts as the Proton acceptor. Mg(2+) is bound at residue Asp124. Gln251 serves as a coordination point for substrate. Position 279 (Asp279) interacts with Mg(2+). Glu323 to Gln325 serves as a coordination point for substrate. ATP is bound by residues Asp510 and Gly547. Mg(2+) is bound at residue Asn548. Substrate is bound at residue Ser550.

The protein belongs to the FGAMS family. As to quaternary structure, monomer. Part of the FGAM synthase complex composed of 1 PurL, 1 PurQ and 2 PurS subunits.

It localises to the cytoplasm. It carries out the reaction N(2)-formyl-N(1)-(5-phospho-beta-D-ribosyl)glycinamide + L-glutamine + ATP + H2O = 2-formamido-N(1)-(5-O-phospho-beta-D-ribosyl)acetamidine + L-glutamate + ADP + phosphate + H(+). It participates in purine metabolism; IMP biosynthesis via de novo pathway; 5-amino-1-(5-phospho-D-ribosyl)imidazole from N(2)-formyl-N(1)-(5-phospho-D-ribosyl)glycinamide: step 1/2. Part of the phosphoribosylformylglycinamidine synthase complex involved in the purines biosynthetic pathway. Catalyzes the ATP-dependent conversion of formylglycinamide ribonucleotide (FGAR) and glutamine to yield formylglycinamidine ribonucleotide (FGAM) and glutamate. The FGAM synthase complex is composed of three subunits. PurQ produces an ammonia molecule by converting glutamine to glutamate. PurL transfers the ammonia molecule to FGAR to form FGAM in an ATP-dependent manner. PurS interacts with PurQ and PurL and is thought to assist in the transfer of the ammonia molecule from PurQ to PurL. The chain is Phosphoribosylformylglycinamidine synthase subunit PurL from Picrophilus torridus (strain ATCC 700027 / DSM 9790 / JCM 10055 / NBRC 100828 / KAW 2/3).